Reading from the N-terminus, the 281-residue chain is Bis(5'-nucleosyl)-tetraphosphatase, symmetrical (281 aa).

It belongs to the Ap4A hydrolase family.

It carries out the reaction P(1),P(4)-bis(5'-adenosyl) tetraphosphate + H2O = 2 ADP + 2 H(+). Its function is as follows. Hydrolyzes diadenosine 5',5'''-P1,P4-tetraphosphate to yield ADP. In Delftia acidovorans (strain DSM 14801 / SPH-1), this protein is Bis(5'-nucleosyl)-tetraphosphatase, symmetrical.